A 122-amino-acid polypeptide reads, in one-letter code: Large ribosomal subunit protein uL14 (122 aa).

The protein belongs to the universal ribosomal protein uL14 family. Part of the 50S ribosomal subunit. Forms a cluster with proteins L3 and L19. In the 70S ribosome, L14 and L19 interact and together make contacts with the 16S rRNA in bridges B5 and B8.

Its function is as follows. Binds to 23S rRNA. Forms part of two intersubunit bridges in the 70S ribosome. This is Large ribosomal subunit protein uL14 from Pseudoalteromonas translucida (strain TAC 125).